The sequence spans 330 residues: D-lactate dehydrogenase (330 aa).

Residues arginine 155 to isoleucine 156, aspartate 175, methionine 206 to proline 207, asparagine 212, methionine 233 to arginine 235, and aspartate 259 each bind NAD(+). Arginine 235 is a catalytic residue. Residue glutamate 264 is part of the active site. Histidine 296 (proton donor) is an active-site residue.

It belongs to the D-isomer specific 2-hydroxyacid dehydrogenase family.

It carries out the reaction (R)-lactate + NAD(+) = pyruvate + NADH + H(+). In Streptococcus agalactiae serotype III (strain NEM316), this protein is D-lactate dehydrogenase (ldhD).